The chain runs to 680 residues: DNA ligase (680 aa).

32-36 (DTVYD) serves as a coordination point for NAD(+). The tract at residues 47–66 (QNDPGLQRPDSPTQRVGGAP) is disordered. Residues 81 to 82 (SL) and Glu115 each bind NAD(+). The active-site N6-AMP-lysine intermediate is Lys117. Residues Arg138, Glu175, Lys291, and Lys315 each contribute to the NAD(+) site. Positions 409, 412, 427, and 432 each coordinate Zn(2+). The BRCT domain maps to 602 to 680 (DADGVLQGKT…EADLTALLQP (79 aa)).

The protein belongs to the NAD-dependent DNA ligase family. LigA subfamily. It depends on Mg(2+) as a cofactor. Mn(2+) serves as cofactor.

It carries out the reaction NAD(+) + (deoxyribonucleotide)n-3'-hydroxyl + 5'-phospho-(deoxyribonucleotide)m = (deoxyribonucleotide)n+m + AMP + beta-nicotinamide D-nucleotide.. In terms of biological role, DNA ligase that catalyzes the formation of phosphodiester linkages between 5'-phosphoryl and 3'-hydroxyl groups in double-stranded DNA using NAD as a coenzyme and as the energy source for the reaction. It is essential for DNA replication and repair of damaged DNA. The chain is DNA ligase from Synechococcus sp. (strain CC9605).